A 311-amino-acid polypeptide reads, in one-letter code: Porphobilinogen deaminase (311 aa).

Cys241 is modified (S-(dipyrrolylmethanemethyl)cysteine).

This sequence belongs to the HMBS family. As to quaternary structure, monomer. It depends on dipyrromethane as a cofactor.

The enzyme catalyses 4 porphobilinogen + H2O = hydroxymethylbilane + 4 NH4(+). Its pathway is porphyrin-containing compound metabolism; protoporphyrin-IX biosynthesis; coproporphyrinogen-III from 5-aminolevulinate: step 2/4. Functionally, tetrapolymerization of the monopyrrole PBG into the hydroxymethylbilane pre-uroporphyrinogen in several discrete steps. This chain is Porphobilinogen deaminase (hemC), found in Halalkalibacterium halodurans (strain ATCC BAA-125 / DSM 18197 / FERM 7344 / JCM 9153 / C-125) (Bacillus halodurans).